The following is a 448-amino-acid chain: Methylenetetrahydrofolate--tRNA-(uracil-5-)-methyltransferase TrmFO (448 aa).

13 to 18 (GAGLAG) contributes to the FAD binding site.

The protein belongs to the MnmG family. TrmFO subfamily. The cofactor is FAD.

The protein resides in the cytoplasm. It catalyses the reaction uridine(54) in tRNA + (6R)-5,10-methylene-5,6,7,8-tetrahydrofolate + NADH + H(+) = 5-methyluridine(54) in tRNA + (6S)-5,6,7,8-tetrahydrofolate + NAD(+). The enzyme catalyses uridine(54) in tRNA + (6R)-5,10-methylene-5,6,7,8-tetrahydrofolate + NADPH + H(+) = 5-methyluridine(54) in tRNA + (6S)-5,6,7,8-tetrahydrofolate + NADP(+). Catalyzes the folate-dependent formation of 5-methyl-uridine at position 54 (M-5-U54) in all tRNAs. The polypeptide is Methylenetetrahydrofolate--tRNA-(uracil-5-)-methyltransferase TrmFO (Streptococcus pyogenes serotype M1).